The chain runs to 354 residues: N-acetyl-gamma-glutamyl-phosphate reductase (354 aa).

Cys-156 is an active-site residue.

The protein belongs to the NAGSA dehydrogenase family. Type 1 subfamily.

The protein resides in the cytoplasm. It catalyses the reaction N-acetyl-L-glutamate 5-semialdehyde + phosphate + NADP(+) = N-acetyl-L-glutamyl 5-phosphate + NADPH + H(+). Its pathway is amino-acid biosynthesis; L-arginine biosynthesis; N(2)-acetyl-L-ornithine from L-glutamate: step 3/4. In terms of biological role, catalyzes the NADPH-dependent reduction of N-acetyl-5-glutamyl phosphate to yield N-acetyl-L-glutamate 5-semialdehyde. The chain is N-acetyl-gamma-glutamyl-phosphate reductase from Bordetella pertussis (strain Tohama I / ATCC BAA-589 / NCTC 13251).